The chain runs to 437 residues: MSLLQLTASITKAAADLDDATNNAAKASEIESKAKTALLDAAERLVLAYRSPRQWLIDLSFQHCATASLQMIMKYRLHHAVPKQGSRSFAEIAEIITTPDQPGKLPESLVGRLLQHAMSFGLFTPAASGRVAHNDASLLLVTDPDLEAWVYLCSNVAYPAGAQLPKAIEQYGASSEPSETAYSVSIGRRISQFERFREPDGHAEHEMFARAMKGISAGGAYDVGHVVDGGYPWHELPEGTLVVDVGGGPGHVAIALARKYPQLLFEVQDLVETVEFGAKNCPKDLQHRVSFRAQDFFKPQPQRETDSRTIVYFARFILHDWSDKYAGQIVEPLAQAMRPQDRLILNEVVVPEPSVEQRIERKSHDRDLLMLMNLNGRERTLVAFEGLFEVVSPRLRVEKVHKPTTGGELSLITASVDKLTGRKSAGGDIFGANVDEA.

Asp269 serves as a coordination point for S-adenosyl-L-methionine. His319 (proton acceptor) is an active-site residue.

This sequence belongs to the class I-like SAM-binding methyltransferase superfamily. Cation-independent O-methyltransferase family. COMT subfamily.

It participates in secondary metabolite biosynthesis. In terms of biological role, O-methyltransferase; part of the gene cluster that mediates the biosynthesis of elsinochrome C, a perelyenequinone phytotoxin structurally similar to cercosporin. The first step of elsinochrome C biosynthesis is performed by the polyketide synthase elcA which catalyzes the formation of nor-toralactone. The starter unit acyltransferase (SAT) domain of elcA initiates polyketide extension by the selective utilization of acetyl-CoA, which is elongated to the heptaketide in the beta-ketoacyl synthase (KS) domain by successive condensations with six malonyl units introduced by the malonyl acyltransferase (MAT) domain. The product template (PT) domain catalyzes C4-C9 and C2-C11 aldol cyclizations and dehydrations to a trihydroxynaphthalene, which is thought to be delivered to the thioesterase (TE) domain for product release. The bifunctional enzyme elcB then methylates nor-toralactone to toralactone before conducting an unusual oxidative aromatic ring opening. The next step in perylenequinone biosynthesis is an O-methylation at the nascent OH-6 of the elcB product performed by the O-methyltransferase elcD. The oxidative coupling of the two monomeric naphthol units in perylenequinone biosynthesis is catalyzed by the FAD-dependent monooxygenase elcE and the multicopper oxidase elcG. ElcG might catalyze the first intermolecular coupling in a regio- and stereo-selective manner via a phenol radical coupling mechanism and the elcE could forge the second C-C bond intramolecularly via a hydride transfer mechanism. The fasciclin domain-containing protein elcF might also play a role duting this step. The last piece of the puzzle in the biosynthesis of elsinochrome C is the additional annulation by enolate coupling to afford the dihydrobenzo(ghi)perylenequinone system, catalyzed by the FAD-dependent monooxygenase elcH. This chain is O-methyltransferase elcB, found in Phaeosphaeria nodorum (strain SN15 / ATCC MYA-4574 / FGSC 10173) (Glume blotch fungus).